A 305-amino-acid chain; its full sequence is Probable cell division protein WhiA (305 aa).

Positions 272 to 305 form a DNA-binding region, H-T-H motif; that stretch reads SIQQLADSLTVPITKSGVNHRLRKINKIADELTD.

It belongs to the WhiA family.

In terms of biological role, involved in cell division and chromosome segregation. This chain is Probable cell division protein WhiA, found in Streptococcus suis (strain 98HAH33).